A 923-amino-acid polypeptide reads, in one-letter code: MKVGWPGESCWQVGLAVEDSPALGAPRVGALPDVVPEGTLLNMVLRRMHRPRSCSYQLLLEHQRPSCIQGLRWTPLTNSEESLDFSESLEQASTERVLRAGRQLHRHLLATCPNLIRDRKYHLRLYRQCCSGRELVDGILALGLGVHSRSQVVGICQVLLDEGALCHVKHDWAFQDRDAQFYRFPGPEPEPVRTHEMEEELAEAVALLSQRGPDALLTVALRKPPGQRTDEELDLIFEELLHIKAVAHLSNSVKRELAAVLLFEPHSKAGTVLFSQGDKGTSWYIIWKGSVNVVTHGKGLVTTLHEGDDFGQLALVNDAPRAATIILREDNCHFLRVDKQDFNRIIKDVEAKTMRLEEHGKVVLVLERASQGAGPSRPPTPGRNRYTVMSGTPEKILELLLEAMGPDSSAHDPTETFLSDFLLTHRVFMPSAQLCAALLHHFHVEPAGGSEQERSTYVCNKRQQILRLVSQWVALYGSMLHTDPVATSFLQKLSDLVGRDTRLSNLLREQWPERRRCHRLENGCGNASPQMKARNLPVWLPNQDEPLPGSSCAIQVGDKVPYDICRPDHSVLTLQLPVTASVREVMAALAQEDGWTKGQVLVKVNSAGDAIGLQPDARGVATSLGLNERLFVVNPQEVHELIPHPDQLGPTVGSAEGLDLVSAKDLAGQLTDHDWSLFNSIHQVELIHYVLGPQHLRDVTTANLERFMRRFNELQYWVATELCLCPVPGPRAQLLRKFIKLAAHLKEQKNLNSFFAVMFGLSNSAISRLAHTWERLPHKVRKLYSALERLLDPSWNHRVYRLALAKLSPPVIPFMPLLLKDMTFIHEGNHTLVENLINFEKMRMMARAARMLHHCRSHNPVPLSPLRSRVSHLHEDSQVARISTCSEQSLSTRSPASTWAYVQQLKVIDNQRELSRLSRELEP.

The residue at position 79 (Ser79) is a Phosphoserine. The 77-residue stretch at 110-186 (ATCPNLIRDR…RDAQFYRFPG (77 aa)) folds into the DEP domain. Residues 218–242 (TVALRKPPGQRTDEELDLIFEELLH) are interaction with PDE3B. 3',5'-cyclic AMP contacts are provided by residues 311-314 (GQLA) and 321-322 (RA). Positions 384–518 (NRYTVMSGTP…EQWPERRRCH (135 aa)) constitute an N-terminal Ras-GEF domain. Residues 398–422 (ELLLEAMGPDSSAHDPTETFLSDFL) form an interaction with PDE3B region. 2 positions are modified to phosphoserine: Ser528 and Ser864. A Ras-GEF domain is found at 662 to 889 (SAKDLAGQLT…ARISTCSEQS (228 aa)).

Interacts with PDE3B and PIK3R6; form a signaling complex that regulates phosphatidylinositol 3-kinase gamma in angiogenesis. As to expression, widely expressed with highest levels in adult kidney, heart, thyroid and brain, and fetal kidney.

It localises to the endomembrane system. Guanine nucleotide exchange factor (GEF) for RAP1A and RAP2A small GTPases that is activated by binding cAMP. Through simultaneous binding of PDE3B to RAPGEF3 and PIK3R6 is assembled in a signaling complex in which it activates the PI3K gamma complex and which is involved in angiogenesis. Plays a role in the modulation of the cAMP-induced dynamic control of endothelial barrier function through a pathway that is independent on Rho-mediated signaling. Required for the actin rearrangement at cell-cell junctions, such as stress fibers and junctional actin. The sequence is that of Rap guanine nucleotide exchange factor 3 (RAPGEF3) from Homo sapiens (Human).